A 468-amino-acid chain; its full sequence is 3-isopropylmalate dehydratase large subunit (468 aa).

The [4Fe-4S] cluster site is built by C347, C407, and C410.

The protein belongs to the aconitase/IPM isomerase family. LeuC type 1 subfamily. In terms of assembly, heterodimer of LeuC and LeuD. [4Fe-4S] cluster serves as cofactor.

It catalyses the reaction (2R,3S)-3-isopropylmalate = (2S)-2-isopropylmalate. The protein operates within amino-acid biosynthesis; L-leucine biosynthesis; L-leucine from 3-methyl-2-oxobutanoate: step 2/4. Its function is as follows. Catalyzes the isomerization between 2-isopropylmalate and 3-isopropylmalate, via the formation of 2-isopropylmaleate. The chain is 3-isopropylmalate dehydratase large subunit from Glaesserella parasuis serovar 5 (strain SH0165) (Haemophilus parasuis).